We begin with the raw amino-acid sequence, 424 residues long: Serine--tRNA ligase (424 aa).

Position 233–235 (Thr233–Glu235) interacts with L-serine. Arg264–Glu266 serves as a coordination point for ATP. Residue Glu287 participates in L-serine binding. ATP is bound at residue Glu351 to Ser354. An L-serine-binding site is contributed by Ser386.

It belongs to the class-II aminoacyl-tRNA synthetase family. Type-1 seryl-tRNA synthetase subfamily. Homodimer. The tRNA molecule binds across the dimer.

It localises to the cytoplasm. The enzyme catalyses tRNA(Ser) + L-serine + ATP = L-seryl-tRNA(Ser) + AMP + diphosphate + H(+). The catalysed reaction is tRNA(Sec) + L-serine + ATP = L-seryl-tRNA(Sec) + AMP + diphosphate + H(+). It participates in aminoacyl-tRNA biosynthesis; selenocysteinyl-tRNA(Sec) biosynthesis; L-seryl-tRNA(Sec) from L-serine and tRNA(Sec): step 1/1. Its function is as follows. Catalyzes the attachment of serine to tRNA(Ser). Is also able to aminoacylate tRNA(Sec) with serine, to form the misacylated tRNA L-seryl-tRNA(Sec), which will be further converted into selenocysteinyl-tRNA(Sec). This Petrotoga mobilis (strain DSM 10674 / SJ95) protein is Serine--tRNA ligase.